The following is a 102-amino-acid chain: UPF0235 protein Swol_0959 (102 aa).

The protein belongs to the UPF0235 family.

The chain is UPF0235 protein Swol_0959 from Syntrophomonas wolfei subsp. wolfei (strain DSM 2245B / Goettingen).